A 331-amino-acid polypeptide reads, in one-letter code: Anthranilate phosphoribosyltransferase (331 aa).

5-phospho-alpha-D-ribose 1-diphosphate-binding positions include glycine 79, 82–83, serine 87, 89–92, 107–115, and serine 119; these read GD, NIST, and KHCNSSISG. Residue glycine 79 participates in anthranilate binding. Serine 91 is a Mg(2+) binding site. Asparagine 110 lines the anthranilate pocket. Arginine 165 is an anthranilate binding site. Positions 223 and 224 each coordinate Mg(2+).

This sequence belongs to the anthranilate phosphoribosyltransferase family. As to quaternary structure, homodimer. Mg(2+) serves as cofactor.

It catalyses the reaction N-(5-phospho-beta-D-ribosyl)anthranilate + diphosphate = 5-phospho-alpha-D-ribose 1-diphosphate + anthranilate. It participates in amino-acid biosynthesis; L-tryptophan biosynthesis; L-tryptophan from chorismate: step 2/5. In terms of biological role, catalyzes the transfer of the phosphoribosyl group of 5-phosphorylribose-1-pyrophosphate (PRPP) to anthranilate to yield N-(5'-phosphoribosyl)-anthranilate (PRA). This is Anthranilate phosphoribosyltransferase from Buchnera aphidicola subsp. Melaphis rhois.